A 217-amino-acid polypeptide reads, in one-letter code: Pyridoxine/pyridoxamine 5'-phosphate oxidase (217 aa).

Substrate contacts are provided by residues 13–16 and lysine 71; that span reads RREY. FMN is bound by residues 66–71, 81–82, arginine 87, lysine 88, and glutamine 110; these read RIVLLK and YT. Residues tyrosine 128, arginine 132, and serine 136 each contribute to the substrate site. Residues 145-146 and tryptophan 190 contribute to the FMN site; that span reads QS. 196-198 lines the substrate pocket; sequence RLH. Arginine 200 lines the FMN pocket.

It belongs to the pyridoxamine 5'-phosphate oxidase family. In terms of assembly, homodimer. FMN serves as cofactor.

It carries out the reaction pyridoxamine 5'-phosphate + O2 + H2O = pyridoxal 5'-phosphate + H2O2 + NH4(+). The enzyme catalyses pyridoxine 5'-phosphate + O2 = pyridoxal 5'-phosphate + H2O2. It participates in cofactor metabolism; pyridoxal 5'-phosphate salvage; pyridoxal 5'-phosphate from pyridoxamine 5'-phosphate: step 1/1. The protein operates within cofactor metabolism; pyridoxal 5'-phosphate salvage; pyridoxal 5'-phosphate from pyridoxine 5'-phosphate: step 1/1. Its function is as follows. Catalyzes the oxidation of either pyridoxine 5'-phosphate (PNP) or pyridoxamine 5'-phosphate (PMP) into pyridoxal 5'-phosphate (PLP). This is Pyridoxine/pyridoxamine 5'-phosphate oxidase from Proteus mirabilis (strain HI4320).